Consider the following 371-residue polypeptide: Anhydro-N-acetylmuramic acid kinase (371 aa).

Residue 9-16 (GTSLDAVD) participates in ATP binding.

This sequence belongs to the anhydro-N-acetylmuramic acid kinase family.

The catalysed reaction is 1,6-anhydro-N-acetyl-beta-muramate + ATP + H2O = N-acetyl-D-muramate 6-phosphate + ADP + H(+). Its pathway is amino-sugar metabolism; 1,6-anhydro-N-acetylmuramate degradation. It participates in cell wall biogenesis; peptidoglycan recycling. Its function is as follows. Catalyzes the specific phosphorylation of 1,6-anhydro-N-acetylmuramic acid (anhMurNAc) with the simultaneous cleavage of the 1,6-anhydro ring, generating MurNAc-6-P. Is required for the utilization of anhMurNAc either imported from the medium or derived from its own cell wall murein, and thus plays a role in cell wall recycling. The sequence is that of Anhydro-N-acetylmuramic acid kinase from Caulobacter vibrioides (strain ATCC 19089 / CIP 103742 / CB 15) (Caulobacter crescentus).